Reading from the N-terminus, the 354-residue chain is Coiled-coil domain-containing protein 86 (354 aa).

Positions 1–354 are disordered; sequence MDTPLRRSRR…QPPQRPATKV (354 aa). Phosphoserine is present on residues Ser-18 and Ser-24. The span at 31–44 shows a compositional bias: basic and acidic residues; the sequence is VLVEFESNPKETGE. Ser-47 and Ser-53 each carry phosphoserine. Over residues 49 to 58 the composition is skewed to low complexity; it reads PGLGSPSRQP. Phosphothreonine is present on Thr-60. A phosphoserine mark is found at Ser-61, Ser-64, Ser-75, Ser-86, Ser-105, Ser-108, Ser-123, and Ser-183. The span at 97–107 shows a compositional bias: polar residues; sequence FPQNQPESSPE. Basic and acidic residues predominate over residues 199–211; that stretch reads PAREGPAPKKREG. Phosphoserine is present on residues Ser-212 and Ser-213. Residues 232-248 show a composition bias toward basic residues; it reads GKPKSGRVWKDRSKKRF. 2 stretches are compositionally biased toward basic and acidic residues: residues 267–289 and 297–311; these read DRQE…ERRR and AENL…RKAE. The stretch at 274–317 forms a coiled coil; that stretch reads AKDFARHLEEEKERRRQEKKKRRAENLRRRLENERKAEIVQVIR. A compositionally biased stretch (basic residues) spans 320–330; that stretch reads AKLKRAKKKQL. Arg-336 bears the Citrulline mark.

In terms of processing, citrullinated by PADI4.

It is found in the nucleus. It localises to the chromosome. The protein localises to the nucleolus. Functionally, required for proper chromosome segregation during mitosis and error-free mitotic progression. This chain is Coiled-coil domain-containing protein 86, found in Bos taurus (Bovine).